The sequence spans 1312 residues: Angiotensin-converting enzyme (1312 aa).

A signal peptide spans 1–34 (MGAASGQRGRWPLSPPLLMLSLLVLLLQPSPAPA). Over 35 to 1264 (LDPGLQPGNF…LEPQQARVGQ (1230 aa)) the chain is Extracellular. Peptidase M2 domains lie at 45–629 (SPDE…LGWP) and 648–1227 (ETDE…LGWP). N-linked (GlcNAc...) asparagine glycans are attached at residues Asn59, Asn79, Asn116, Asn151, and Asn165. Cys162 and Cys170 form a disulfide bridge. Chloride is bound at residue Tyr236. Residue Asn323 is glycosylated (N-linked (GlcNAc...) asparagine). Cys364 and Cys382 are joined by a disulfide. Residue His395 coordinates Zn(2+). The Proton acceptor 1 role is filled by Glu396. Residues His399 and Glu423 each coordinate Zn(2+). The N-linked (GlcNAc...) asparagine glycan is linked to Asn514. Residue His525 is the Proton donor 1 of the active site. Position 534 (Arg534) interacts with chloride. A disulfide bridge links Cys550 with Cys562. Residue Asn682 is glycosylated (N-linked (GlcNAc...) asparagine). 2 N-linked (GlcNAc...) (complex) asparagine glycosylation sites follow: Asn700 and Asn719. Cys762 and Cys768 are joined by a disulfide. N-linked (GlcNAc...) asparagine glycosylation occurs at Asn765. 2 residues coordinate chloride: Arg796 and Tyr834. N-linked (GlcNAc...) asparagine glycosylation is present at Asn947. Cys962 and Cys980 are disulfide-bonded. Residue His993 coordinates Zn(2+). Catalysis depends on Glu994, which acts as the Proton acceptor 2. His997 and Glu1021 together coordinate Zn(2+). Positions 1095 and 1099 each coordinate chloride. His1123 serves as the catalytic Proton donor 2. Position 1132 (Arg1132) interacts with chloride. An intrachain disulfide couples Cys1148 to Cys1160. A glycan (N-linked (GlcNAc...) asparagine) is linked at Asn1196. Residues 1220 to 1261 (HGETLGWPEYNWAPNTARAEGSTAESNRVNFLGLYLEPQQAR) form a juxtamembrane stalk region. A helical membrane pass occupies residues 1265–1281 (WVLLFLGVALLVATVGL). The Cytoplasmic segment spans residues 1282-1312 (AHRLYNIRNHHSLRRPHRGPQFGSEVELRHS). A Phosphoserine modification is found at Ser1305.

It belongs to the peptidase M2 family. Monomer and homodimer; homodimerizes following binding to an inhibitor. Interacts with calmodulin (CALM1, CALM2 or CALM3); interaction takes place in the cytoplasmic region and regulates phosphorylation and proteolytic cleavage. Requires Zn(2+) as cofactor. Chloride serves as cofactor. In terms of processing, produced following proteolytic cleavage by secretase enzymes that cleave the transmembrane form in the juxtamembrane stalk region upstream of the transmembrane region. Cleavage can take place at different sites of the juxtamembrane stalk region. Post-translationally, phosphorylated by CK2 on Ser-1305; which allows membrane retention. Phosphorylated on tyrosine residues on its extracellular part, promoting cleavage by secretase enzymes and formation of the soluble form (Angiotensin-converting enzyme, soluble form). As to expression, highly expressed in kidney and lung; not expressed in the liver. In the brain, expressed in the cerebral cortex, hippocampus, cerebellum and basal ganglia/brainstem. Highly expressed in dopamine receptor DRD1-expressing neurons in the dorsal striatum and the nucleus accumbens of the brain. Specifically expressed in spermatocytes, adult testis.

The protein resides in the cell membrane. The protein localises to the cytoplasm. It is found in the secreted. It carries out the reaction Release of a C-terminal dipeptide, oligopeptide-|-Xaa-Yaa, when Xaa is not Pro, and Yaa is neither Asp nor Glu. Thus, conversion of angiotensin I to angiotensin II, with increase in vasoconstrictor activity, but no action on angiotensin II.. The catalysed reaction is angiotensin I + H2O = L-histidyl-L-leucine + angiotensin II. The enzyme catalyses bradykinin + H2O = L-Phe-L-Arg + bradykinin(1-7). It catalyses the reaction substance P + H2O = substance P(1-9) + L-Leu-L-Met-NH2. It carries out the reaction substance P + H2O = substance P(1-8) + Gly-L-Leu-L-Met-NH2. The catalysed reaction is substance P + H2O = L-Phe-L-Phe-Gly-L-Leu-L-Met-NH2 + substance P(1-6). The enzyme catalyses neurotensin + H2O = neurotensin(1-11) + L-isoleucyl-L-leucine. It catalyses the reaction goralatide + H2O = N-acetyl-L-seryl-L-aspartate + L-lysyl-L-proline. It carries out the reaction Met-enkephalin + H2O = L-phenylalanyl-L-methionine + L-tyrosylglycylglycine. The catalysed reaction is Leu-enkephalin + H2O = L-tyrosylglycylglycine + L-phenylalanyl-L-leucine. The enzyme catalyses Met-enkephalin-Arg-Phe + H2O = L-arginyl-L-phenylalanine + Met-enkephalin. The dipeptidyl carboxypeptidase activity is specifically inhibited by lisinopril, captopril and enalaprilat. The N-terminal catalytic domain, but not the C-terminal catalytic domain, is specifically inhibited by the phosphinic peptide RXP 407. Its activity is regulated as follows. The putative GPIase activity is nearly insensitive to captopril. Dipeptidyl carboxypeptidase that removes dipeptides from the C-terminus of a variety of circulating hormones, such as angiotensin I, bradykinin or enkephalins, thereby playing a key role in the regulation of blood pressure, electrolyte homeostasis or synaptic plasticity. Composed of two similar catalytic domains, each possessing a functional active site, with different selectivity for substrates. Plays a major role in the angiotensin-renin system that regulates blood pressure and sodium retention by the kidney by converting angiotensin I to angiotensin II, resulting in an increase of the vasoconstrictor activity of angiotensin. Also able to inactivate bradykinin, a potent vasodilator, and therefore enhance the blood pressure response. Acts as a regulator of synaptic transmission by mediating cleavage of neuropeptide hormones, such as substance P, neurotensin or enkephalins. Catalyzes degradation of different enkephalin neuropeptides (Met-enkephalin, Leu-enkephalin, Met-enkephalin-Arg-Phe and possibly Met-enkephalin-Arg-Gly-Leu). Acts as a regulator of synaptic plasticity in the nucleus accumbens of the brain by mediating cleavage of Met-enkephalin-Arg-Phe, a strong ligand of Mu-type opioid receptor OPRM1, into Met-enkephalin. Met-enkephalin-Arg-Phe cleavage by ACE decreases activation of OPRM1, leading to long-term synaptic potentiation of glutamate release. Also acts as a regulator of hematopoietic stem cell differentiation by mediating degradation of hemoregulatory peptide N-acetyl-SDKP (AcSDKP). Acts as a regulator of cannabinoid signaling pathway by mediating degradation of hemopressin, an antagonist peptide of the cannabinoid receptor CNR1. Involved in amyloid-beta metabolism by catalyzing degradation of Amyloid-beta protein 40 and Amyloid-beta protein 42 peptides, thereby preventing plaque formation. Catalyzes cleavage of cholecystokinin (maturation of Cholecystokinin-8 and Cholecystokinin-5) and Gonadoliberin-1 (both maturation and degradation) hormones. Degradation of hemoregulatory peptide N-acetyl-SDKP (AcSDKP) and amyloid-beta proteins is mediated by the N-terminal catalytic domain, while angiotensin I and cholecystokinin cleavage is mediated by the C-terminal catalytic region. Functionally, soluble form that is released in blood plasma and other body fluids following proteolytic cleavage in the juxtamembrane stalk region. Its function is as follows. Isoform produced by alternative promoter usage that is specifically expressed in spermatocytes and adult testis, and which is required for male fertility. In contrast to somatic isoforms, only contains one catalytic domain. Acts as a dipeptidyl carboxypeptidase that removes dipeptides from the C-terminus of substrates. The identity of substrates that are needed for male fertility is unknown. Isoform Testis-specific and isoform Somatic have distinct activities and cannot completely compensate for the loss of the other when expressed in somatic tissues or testis. May also have a glycosidase activity which releases GPI-anchored proteins from the membrane by cleaving the mannose linkage in the GPI moiety. The GPIase activity was reported to be essential for the egg-binding ability of the sperm. This activity is however unclear and has been challenged by other groups, suggesting that it may be indirect. This Mus musculus (Mouse) protein is Angiotensin-converting enzyme.